The following is a 533-amino-acid chain: Calcium/calmodulin-dependent protein kinase type II (533 aa).

ATP is bound by residues 18-26 and Lys-41; that span reads LGKGAFSVV. Residue Asp-134 is the Proton acceptor of the active site. Thr-284 carries the post-translational modification Phosphothreonine; by autocatalysis. Polar residues-rich tracts occupy residues 316–345 and 377–391; these read TSDSTGSVASNGSTTHDTSQIAGTSSQPTS and PPSTIKESSESSQTI. Disordered stretches follow at residues 316–347 and 369–400; these read TSDSTGSVASNGSTTHDTSQIAGTSSQPTSPA and LLNKKEQGPPSTIKESSESSQTIDDNDSEKAQ.

Belongs to the protein kinase superfamily. CAMK Ser/Thr protein kinase family. CaMK subfamily. In terms of assembly, dodecamer. Subunits are tightly packed around a central ring-shaped scaffold with extensive contacts between the regulatory segment of one kinase and the catalytic domain of another enabling cooperative activation of a subunit by the adjacent molecule. Interacts with and phosphorylates daf-16; the interaction promotes daf-16 nuclear localization. Interacts with egl-2 and tir-1. Interacts with nsy-1. Requires Mg(2+) as cofactor.

Its subcellular location is the cytoplasm. It is found in the cell projection. The protein resides in the axon. It localises to the perikaryon. The enzyme catalyses L-seryl-[protein] + ATP = O-phospho-L-seryl-[protein] + ADP + H(+). The catalysed reaction is L-threonyl-[protein] + ATP = O-phospho-L-threonyl-[protein] + ADP + H(+). Ca(2+)/calmodulin binding removes an autoinhibitory regulatory segment located C-terminal to the kinase domain. This releases the catalytic activity of the enzyme and makes accessible a regulatory residue Thr-284. Phosphorylation of Thr-284 by another kinase domain within the oligomeric holoenzyme keeps CaMKII active in the absence of Ca(2+)/calmodulin by preventing the rebinding of the regulatory segment to the kinase domain and by increasing the affinity of calmodulin for the enzyme. Can respond to high-frequency Ca(2+) pulses to become Ca(2+) independent. Functionally, role in locomotion and neuronal cell fate specification. Required for the regulation of synaptic density, egg laying, defecation, and meiotic maturation. Required for viability under chronic osmotic stress in which it acts downstream of osr-1. Regulates the synaptic trafficking of glr-1. Bidirectional modulator of neurotransmitter release with negative modulatory effects mainly mediated via slo-1 activation. May suppress the functional response to an internal pacemaker, perhaps by modulating the activity of the IP3 receptor. This chain is Calcium/calmodulin-dependent protein kinase type II, found in Caenorhabditis briggsae.